We begin with the raw amino-acid sequence, 389 residues long: MTSRKPLARYRRIVIKIGSALLVDRKAGLKKAWLDAMCADIAGLKAKGIDVLVVSSGAIALGRSVLDLPSGALKLEESQAAAAVGQIALARAWSESLSRDEIVAGQILLTLGDTEERRRYLNARATINQLLKIGAVPIINENDTVATSEIRYGDNDRLAARVATMTGADLLILLSDIDGLYTAPPHLDPNATFLETIAEITPDIEAMAGGAASELSRGGMRTKIDAGKIATTSGCAMIIASGKPDSPLSSIENGARSSWFAPSGTPVTARKIWIAGQLQPAGELHVDDGAVTALGAGKSLLPAGVRSVSGLFSRGDTVAIVGPEGREIARGLVSYDAEDARRIAGRKSAEIEAILGYAGRAAMVHRDDMVMSAQLRQKSERQKKDAAHA.

An ATP-binding site is contributed by lysine 16. 3 residues coordinate substrate: serine 56, aspartate 143, and asparagine 155. 175 to 176 provides a ligand contact to ATP; sequence SD. The PUA domain maps to 281-358; that stretch reads AGELHVDDGA…AEIEAILGYA (78 aa).

This sequence belongs to the glutamate 5-kinase family.

The protein resides in the cytoplasm. The enzyme catalyses L-glutamate + ATP = L-glutamyl 5-phosphate + ADP. It participates in amino-acid biosynthesis; L-proline biosynthesis; L-glutamate 5-semialdehyde from L-glutamate: step 1/2. In terms of biological role, catalyzes the transfer of a phosphate group to glutamate to form L-glutamate 5-phosphate. The sequence is that of Glutamate 5-kinase from Rhizobium etli (strain CIAT 652).